The primary structure comprises 495 residues: Nuclear receptor subfamily 6 group A member 1 (495 aa).

A disordered region spans residues 1–34 (MERDERPPSGGGGGGGSAGFLEPPAALPPPPRNG). Over residues 9–18 (SGGGGGGGSA) the composition is skewed to gly residues. The nuclear receptor DNA-binding region spans 72–147 (QRTCLICGDR…MGMNRKAIRE (76 aa)). Positions 75, 78, 92, 95, 111, 117, 127, and 130 each coordinate Zn(2+). NR C4-type zinc fingers lie at residues 75–95 (CLICGDRATGLHYGIISCEGC) and 111–135 (CSRDKNCVMSRKQRNRCQYCRLLKC). Disordered regions lie at residues 145–165 (IREDGMPGGRNKSIGPVQISE) and 177–214 (FEEEANHWSNHGDSDHSSPGNRASESNQPSPGSTLSSS). Residues 180-192 (EANHWSNHGDSDH) are compositionally biased toward basic and acidic residues. Residues 187–268 (HGDSDHSSPG…RSLDPQSYSL (82 aa)) are sufficient for interaction with UIMC1. The segment covering 202–214 (SNQPSPGSTLSSS) has biased composition (low complexity). In terms of domain architecture, NR LBD spans 264–495 (QSYSLIHQLM…HSCKTSTVKE (232 aa)).

It belongs to the nuclear hormone receptor family. NR6 subfamily. Homodimer. Interacts with UIMC1. As to expression, expressed in the germ cells of both the adult testis and ovary, being most abundant in spermatids.

It localises to the nucleus. Orphan nuclear receptor that binds to a response element containing the sequence 5'-TCAAGGTCA-3'. Acts as a regulator of embryonic stem cell pluripotency by mediating repression of POU5F1/OCT4: binds to the DR0 element within the POU5F1/OCT4 promoter and inhibits POU5F1/OCT4 expression during embryonic stem cell differentiation. Required to restrict POU5F1/OCT4 expression to the germ cell lineage. Involved in the regulation of gene expression in germ cell development during gametogenesis. This chain is Nuclear receptor subfamily 6 group A member 1 (Nr6a1), found in Mus musculus (Mouse).